Here is a 111-residue protein sequence, read N- to C-terminus: Antitoxin PrlF (111 aa).

Positions 12–59 (TTESKVTIRGQTTIPAPVREALKLKPGLDSIHYEILPGGQVFMCRLGD) constitute a SpoVT-AbrB domain.

As to quaternary structure, homodimer; forms a complex with YhaV with stoichiometry PrlF(2)-YhaV(4), possibly as a YhaV(2)-PrlF(2)-YhaV(2) complex like the MazFE complex.

Its subcellular location is the cytoplasm. Its function is as follows. Antitoxin component of a type II toxin-antitoxin (TA) system. Labile antitoxin that binds to the YhaV toxin and neutralizes its ribonuclease activity. Also acts as a transcription factor. The YhaV/PrlF complex binds the prlF-yhaV operon, probably negatively regulating its expression. This chain is Antitoxin PrlF (prlF), found in Escherichia coli O6:H1 (strain CFT073 / ATCC 700928 / UPEC).